A 1035-amino-acid chain; its full sequence is MGKAENYELYSVELGPGPGGDMAAKMSKKKKAGGGGGKRKEKLENMKKEMEINDHQLSVAELEQKYQTSATKGLSASLAAELLLRDGPNALRPPRGTPEYVKFARQLAGGLQCLMWVAAAICLIAFAIQASEGDLTTDDNLYLAIALIAVVVVTGCFGYYQEFKSTNIIASFKNLVPQQATVIRDGDKFQINADQLVVGDLVEMKGGDRVPADIRILAAQGCKVDNSSLTGESEPQTRSPECTHESPLETRNIAFFSTMCLEGTVQGLVVNTGDRTIIGRIASLASGVENEKTPIAIEIEHFVDIIAGLAILFGATFFIVAMCIGYTFLRAMVFFMAIVVAYVPEGLLATVTVCLSLTAKRLASKNCVVKNLEAVETLGSTSVICSDKTGTLTQNRMTVSHLWFDNHIHTADTTEDQSGQTFDQSSETWRALCRVLTLCNRAAFKSGQDAVPVPKRIVIGDASETALLKFSELTLGNAMGYRDRFPKVCEIPFNSTNKFQLSIHTLEDPRDPRHLLVMKGAPERVLERCSSILIKGQELPLDEQWREAFQTAYLSLGGLGERVLGFCQLYLNEKDYPPGYAFDVEAMNFPSSGLCFAGLVSMIDPPRATVPDAVLKCRTAGIRVIMVTGDHPITAKAIAASVGIISEGSETVEDIAARLRVPVDQVNRKDARACVINGMQLKDMDPSELVEALRTHPEMVFARTSPQQKLVIVESCQRLGAIVAVTGDGVNDSPALKKADIGVAMGIAGSDAAKNAADMILLDDNFASIVTGVEQGRLIFDNLKKSIAYTLTKNIPELTPYLIYITVSVPLPLGCITILFIELCTDIFPSVSLAYEKAESDIMHLRPRNPKRDRLVNEPLAAYSYFQIGAIQSFAGFTDYFTAMAQEGWFPLLCVGLRAQWEDHHLQDLQDSYGQEWTFGQRLYQQYTCYTVFFISIEVCQIADVLIRKTRRLSAFQQGFFRNKILVIAIVFQVCIGCFLCYCPGMPNIFNFMPIRFQWWLVPLPYGILIFVYDEIRKLGVRCCPGSWWDQELYY.

The tract at residues Met-1–Glu-41 is disordered. The Cytoplasmic segment spans residues Met-1–Pro-98. Phosphotyrosine occurs at positions 7 and 10. The span at Met-26–Lys-40 shows a compositional bias: basic residues. Phosphoserine is present on Ser-27. The chain crosses the membrane as a helical span at residues Glu-99–Ala-119. The Lumenal portion of the chain corresponds to Ala-120–Tyr-142. The helical transmembrane segment at Leu-143–Phe-163 threads the bilayer. Over Lys-164 to Ile-299 the chain is Cytoplasmic. A helical transmembrane segment spans residues Glu-300 to Ile-319. The Lumenal portion of the chain corresponds to Val-320–Ala-331. The chain crosses the membrane as a helical span at residues Met-332–Ala-349. K(+)-binding residues include Val-340, Ala-341, Val-343, and Glu-345. Residues Thr-350 to Leu-783 lie on the Cytoplasmic side of the membrane. Asp-387 acts as the 4-aspartylphosphate intermediate in catalysis. 2 residues coordinate Mg(2+): Asp-387 and Thr-389. Phosphoserine occurs at positions 463 and 601. Mg(2+)-binding residues include Asp-728 and Asp-732. A helical membrane pass occupies residues Lys-784–Ile-803. Glu-797 serves as a coordination point for K(+). Residues Tyr-804–Leu-813 are Lumenal-facing. Residues Gly-814–Ala-834 traverse the membrane as a helical segment. Residue Glu-822 coordinates K(+). Residues Tyr-835–Arg-854 lie on the Cytoplasmic side of the membrane. A Phosphoserine modification is found at Ser-840. A helical transmembrane segment spans residues Leu-855–Phe-877. Residues Thr-878–Cys-929 lie on the Lumenal side of the membrane. The helical transmembrane segment at Tyr-930–Lys-949 threads the bilayer. At Thr-950–Asn-963 the chain is on the cytoplasmic side. Ser-954 carries the post-translational modification Phosphoserine; by PKA. The helical transmembrane segment at Lys-964–Tyr-982 threads the bilayer. Residues Cys-983 to Phe-997 lie on the Lumenal side of the membrane. The chain crosses the membrane as a helical span at residues Gln-998–Lys-1018. The Cytoplasmic segment spans residues Leu-1019 to Tyr-1035.

This sequence belongs to the cation transport ATPase (P-type) (TC 3.A.3) family. Type IIC subfamily. In terms of assembly, the gastric H(+)/K(+) ATPase pump is composed of the catalytic alpha subunit ATP4A and the regulatory beta subunit ATP4B. Interacts (via the P-domain) with ATP4B (via N-terminus); this interaction stabilizes the lumenal-open E2 conformation state and prevents the reverse reaction of the transport cycle. In terms of tissue distribution, expressed in gastric parietal cells (at protein level).

It is found in the apical cell membrane. The enzyme catalyses K(+)(out) + ATP + H2O + H(+)(in) = K(+)(in) + ADP + phosphate + 2 H(+)(out). The catalytic subunit of the gastric H(+)/K(+) ATPase pump which transports H(+) ions in exchange for K(+) ions across the apical membrane of parietal cells. Uses ATP as an energy source to pump H(+) ions to the gastric lumen while transporting K(+) ion from the lumen into the cell. Remarkably generates a million-fold proton gradient across the gastric parietal cell membrane, acidifying the gastric juice down to pH 1. Within a transport cycle, the transfer of a H(+) ion across the membrane is coupled to ATP hydrolysis and is associated with a transient phosphorylation that shifts the pump conformation from inward-facing (E1) to outward-facing state (E2). The release of the H(+) ion in the stomach lumen is followed by binding of K(+) ion converting the pump conformation back to the E1 state. The sequence is that of Potassium-transporting ATPase alpha chain 1 from Homo sapiens (Human).